The chain runs to 413 residues: Aspartate aminotransferase, cytoplasmic (413 aa).

G39 and W141 together coordinate L-aspartate. At S149 the chain carries Phosphoserine. N195 serves as a coordination point for L-aspartate. Residue K259 is modified to N6-(pyridoxal phosphate)lysine. R387 serves as a coordination point for L-aspartate.

The protein belongs to the class-I pyridoxal-phosphate-dependent aminotransferase family. Homodimer. Pyridoxal 5'-phosphate is required as a cofactor.

It localises to the cytoplasm. The enzyme catalyses L-aspartate + 2-oxoglutarate = oxaloacetate + L-glutamate. It carries out the reaction L-cysteine + 2-oxoglutarate = 2-oxo-3-sulfanylpropanoate + L-glutamate. It catalyses the reaction (2S)-2-aminobutanoate + 2-oxoglutarate = 2-oxobutanoate + L-glutamate. The catalysed reaction is 3-sulfino-L-alanine + 2-oxoglutarate = 3-sulfinopyruvate + L-glutamate. Functionally, biosynthesis of L-glutamate from L-aspartate or L-cysteine. Important regulator of levels of glutamate, the major excitatory neurotransmitter of the vertebrate central nervous system. Acts as a scavenger of glutamate in brain neuroprotection. The aspartate aminotransferase activity is involved in hepatic glucose synthesis during development and in adipocyte glyceroneogenesis. Using L-cysteine as substrate, regulates levels of mercaptopyruvate, an important source of hydrogen sulfide. Mercaptopyruvate is converted into H(2)S via the action of 3-mercaptopyruvate sulfurtransferase (3MST). Hydrogen sulfide is an important synaptic modulator and neuroprotectant in the brain. In addition, catalyzes (2S)-2-aminobutanoate, a by-product in the cysteine biosynthesis pathway. The sequence is that of Aspartate aminotransferase, cytoplasmic from Homo sapiens (Human).